Here is an 84-residue protein sequence, read N- to C-terminus: Beta-toxin Tf1a (84 aa).

The first 20 residues, M1–C20, serve as a signal peptide directing secretion. Residues K21 to G82 enclose the LCN-type CS-alpha/beta domain. 4 disulfide bridges follow: C31-C81, C35-C57, C43-C62, and C47-C64. Residue C81 is modified to Cysteine amide.

The protein belongs to the long (4 C-C) scorpion toxin superfamily. Sodium channel inhibitor family. Beta subfamily. Expressed by the venom gland.

It is found in the secreted. In terms of biological role, beta toxins bind voltage-independently at site-4 of sodium channels (Nav) and shift the voltage of activation toward more negative potentials thereby affecting sodium channel activation and promoting spontaneous and repetitive firing. The toxin induces a leftward shift, on all channels tested (including Blattella germanica and Varroa destructor Nav1), displacing a change in voltage dependence activation to more hyperpolarized potentials. In addition, the toxin mostly inhibits peak current of hNav1.4/SCN4A (53% inhibition of peak current at 100 nM) and hNav1.5/SCN5A (71% inhibition). The protein is Beta-toxin Tf1a of Tityus fasciolatus (Central Brazilian scorpion).